The sequence spans 93 residues: Putative regulatory protein Clos_1422 (93 aa).

Belongs to the RemA family.

This chain is Putative regulatory protein Clos_1422, found in Alkaliphilus oremlandii (strain OhILAs) (Clostridium oremlandii (strain OhILAs)).